A 762-amino-acid polypeptide reads, in one-letter code: 5-methyltetrahydropteroyltriglutamate--homocysteine methyltransferase (762 aa).

5-methyltetrahydropteroyltri-L-glutamate-binding positions include 17–20 and K111; that span reads REWK. Residues 435–437 and E488 contribute to the L-homocysteine site; that span reads IGS. L-methionine contacts are provided by residues 435–437 and E488; that span reads IGS. 5-methyltetrahydropteroyltri-L-glutamate contacts are provided by residues 519-520 and W565; that span reads RC. D603 provides a ligand contact to L-homocysteine. D603 provides a ligand contact to L-methionine. Residue E609 participates in 5-methyltetrahydropteroyltri-L-glutamate binding. Residues H645, C647, and E669 each coordinate Zn(2+). H698 serves as the catalytic Proton donor. C730 contacts Zn(2+).

The protein belongs to the vitamin-B12 independent methionine synthase family. Requires Zn(2+) as cofactor.

It catalyses the reaction 5-methyltetrahydropteroyltri-L-glutamate + L-homocysteine = tetrahydropteroyltri-L-glutamate + L-methionine. It participates in amino-acid biosynthesis; L-methionine biosynthesis via de novo pathway; L-methionine from L-homocysteine (MetE route): step 1/1. Its function is as follows. Catalyzes the transfer of a methyl group from 5-methyltetrahydrofolate to homocysteine resulting in methionine formation. This is 5-methyltetrahydropteroyltriglutamate--homocysteine methyltransferase from Bacillus cereus (strain AH187).